Here is a 109-residue protein sequence, read N- to C-terminus: Spermidine export protein MdtI (109 aa).

The next 4 membrane-spanning stretches (helical) occupy residues 6–26 (WIHAAWLAIAIVLEIIANVFL), 36–56 (IYGILSLAAVLGAFSALSQAV), 64–84 (AYALWGGFGIAATIAAGWVLF), and 88–108 (LNNKGWAGVILLVAGMVLIKL).

This sequence belongs to the drug/metabolite transporter (DMT) superfamily. Small multidrug resistance (SMR) (TC 2.A.7.1) family. MdtI subfamily. Forms a complex with MdtJ.

It localises to the cell inner membrane. Functionally, catalyzes the excretion of spermidine. This chain is Spermidine export protein MdtI, found in Klebsiella pneumoniae subsp. pneumoniae (strain ATCC 700721 / MGH 78578).